Here is a 194-residue protein sequence, read N- to C-terminus: MPKVGMREIRRAQLIDATLRSIDEAGLPGTTLASVAQRANISTGIVSHYFGDKDGLLEATMRHVLRDLWAATTQRRVAARKDPRSRLRAIVAANFDDTQVSAPVMKTWLAFWSQSMHDAMLKRLQHVNTRRLHSNLCAEFAKALPRAKARQAASGLAALIDGLWLRGALAGGPIDTRAALKLAHDYIDLLLASD.

The 61-residue stretch at 8–68 folds into the HTH tetR-type domain; the sequence is EIRRAQLIDA…ATMRHVLRDL (61 aa). A DNA-binding region (H-T-H motif) is located at residues 31–50; the sequence is TLASVAQRANISTGIVSHYF.

The protein operates within amine and polyamine biosynthesis; betaine biosynthesis via choline pathway [regulation]. Repressor involved in the biosynthesis of the osmoprotectant glycine betaine. It represses transcription of the choline transporter BetT and the genes of BetAB involved in the synthesis of glycine betaine. This is HTH-type transcriptional regulator BetI from Burkholderia ambifaria (strain MC40-6).